Here is an 85-residue protein sequence, read N- to C-terminus: Insecticidal toxin Vn1 (85 aa).

An N-terminal signal peptide occupies residues 1 to 23; that stretch reads MFLYRLICLFILICIITVDISTS. A disulfide bond links cysteine 71 and cysteine 84.

Highly expressed in the venom apparatus, and weakly expressed in residual body.

Its subcellular location is the secreted. In terms of biological role, endoparasitoid venom toxin that exhibits insecticidal activity against Tenebrio molitor pupae. Impacts genes related to immune response, environmental information processing, metabolism, and response to external stimuli in T.molitor, suggesting its involvement in the intricate parasitoid wasp-host interaction. The polypeptide is Insecticidal toxin Vn1 (Aphidius gifuensis (Parasitoid wasp)).